The chain runs to 236 residues: 2-C-methyl-D-erythritol 4-phosphate cytidylyltransferase (236 aa).

Belongs to the IspD/TarI cytidylyltransferase family. IspD subfamily.

The enzyme catalyses 2-C-methyl-D-erythritol 4-phosphate + CTP + H(+) = 4-CDP-2-C-methyl-D-erythritol + diphosphate. It participates in isoprenoid biosynthesis; isopentenyl diphosphate biosynthesis via DXP pathway; isopentenyl diphosphate from 1-deoxy-D-xylulose 5-phosphate: step 2/6. Functionally, catalyzes the formation of 4-diphosphocytidyl-2-C-methyl-D-erythritol from CTP and 2-C-methyl-D-erythritol 4-phosphate (MEP). The sequence is that of 2-C-methyl-D-erythritol 4-phosphate cytidylyltransferase from Burkholderia cenocepacia (strain ATCC BAA-245 / DSM 16553 / LMG 16656 / NCTC 13227 / J2315 / CF5610) (Burkholderia cepacia (strain J2315)).